A 411-amino-acid polypeptide reads, in one-letter code: NADH-quinone oxidoreductase subunit D 2 (411 aa).

The protein belongs to the complex I 49 kDa subunit family. As to quaternary structure, NDH-1 is composed of 14 different subunits. Subunits NuoB, C, D, E, F, and G constitute the peripheral sector of the complex.

It is found in the cell membrane. The enzyme catalyses a quinone + NADH + 5 H(+)(in) = a quinol + NAD(+) + 4 H(+)(out). NDH-1 shuttles electrons from NADH, via FMN and iron-sulfur (Fe-S) centers, to quinones in the respiratory chain. The immediate electron acceptor for the enzyme in this species is believed to be ubiquinone. Couples the redox reaction to proton translocation (for every two electrons transferred, four hydrogen ions are translocated across the cytoplasmic membrane), and thus conserves the redox energy in a proton gradient. The sequence is that of NADH-quinone oxidoreductase subunit D 2 from Chloroflexus aurantiacus (strain ATCC 29366 / DSM 635 / J-10-fl).